The chain runs to 404 residues: MDKVKKAVLAFSGGLDTSVILKWLQDTYQCEVVTFTADIGQGEEIEPARAKALQFGIKEIFIEDLREEFVRDYVFPMFRANTVYEGEYLLGTSIARPLIAKRQVEIAQQTGADAVSHGATGKGNDQVRFELGYYALQPDIRVIAPWREWDLTSREKLLAYAEKQGIPIEMKKKQGSPYSMDANLLHISYEGRALEDPAVEAEESMWRWTISPEAAPNEPEYLDLEYERGDIVALNGEKLSPAAVLTKLNQLGGKHGIGRLDLVENRYVGMKSRGCYETPGGTIMLRAHRAIESITLDREVAHLKDDLMPRYAALIYNGYWWSPERKLLQVLIDESQAHVNGQVRVKLYKGNVMVVGRDSRTDSLFDPTIATFEEDGGAYHQADAAGFIKLNALRMRIAKALRRH.

ATP is bound by residues 10–18 and A37; that span reads AFSGGLDTS. L-citrulline is bound by residues Y88 and S93. G118 lines the ATP pocket. Residues T120, N124, and D125 each coordinate L-aspartate. Position 124 (N124) interacts with L-citrulline. Residues R128, S179, S188, E264, and Y276 each coordinate L-citrulline.

It belongs to the argininosuccinate synthase family. Type 1 subfamily. As to quaternary structure, homotetramer.

Its subcellular location is the cytoplasm. It carries out the reaction L-citrulline + L-aspartate + ATP = 2-(N(omega)-L-arginino)succinate + AMP + diphosphate + H(+). It participates in amino-acid biosynthesis; L-arginine biosynthesis; L-arginine from L-ornithine and carbamoyl phosphate: step 2/3. The polypeptide is Argininosuccinate synthase (Nitrosomonas eutropha (strain DSM 101675 / C91 / Nm57)).